The primary structure comprises 101 residues: Integration host factor subunit alpha (101 aa).

The protein belongs to the bacterial histone-like protein family. Heterodimer of an alpha and a beta chain.

Its function is as follows. This protein is one of the two subunits of integration host factor, a specific DNA-binding protein that functions in genetic recombination as well as in transcriptional and translational control. The chain is Integration host factor subunit alpha from Maricaulis maris (strain MCS10) (Caulobacter maris).